The following is a 271-amino-acid chain: Sec-independent protein translocase protein TatC (271 aa).

A run of 6 helical transmembrane segments spans residues 35 to 55 (IIWT…WHEQ), 93 to 113 (AFIA…WLFI), 124 to 144 (YVLP…VFGY), 178 to 198 (IILG…LALM), 213 to 233 (SILV…IMNM), and 234 to 254 (CVFA…AFLV).

It belongs to the TatC family. In terms of assembly, forms a complex with TatA.

It is found in the cell inner membrane. In terms of biological role, part of the twin-arginine translocation (Tat) system that transports large folded proteins containing a characteristic twin-arginine motif in their signal peptide across membranes. The sequence is that of Sec-independent protein translocase protein TatC from Koribacter versatilis (strain Ellin345).